The primary structure comprises 1130 residues: Sodium/potassium/calcium exchanger 1 (1130 aa).

The Extracellular portion of the chain corresponds to 1–419; sequence MGKLIRMGTQ…DLFSVEDRRQ (419 aa). A disordered region spans residues 104-209; it reads PSIAMEDTPN…SPTATVRDRE (106 aa). Positions 125 to 136 are enriched in polar residues; sequence LKNSYSPTTAGT. Residues 170–187 show a composition bias toward basic and acidic residues; the sequence is PRGERKNSSPTHAREKGR. Residues N176 and N273 are each glycosylated (N-linked (GlcNAc...) asparagine). The tract at residues 274–295 is disordered; it reads ISTTPQGAVPQHTPATSEEQMT. Polar residues predominate over residues 286–295; sequence TPATSEEQMT. The helical transmembrane segment at 420-440 threads the bilayer; the sequence is GWVVLHIFGMMYVFVALAIVC. Residues 441-464 are Cytoplasmic-facing; that stretch reads DEYFVPALGVITHKLQISEDVAGA. The Alpha-1 repeat unit spans residues 461 to 501; it reads VAGATFMAAGGSAPELFTSLIGVFISHSNVGIGTIVGSAVF. Residues 465-485 traverse the membrane as a helical segment; sequence TFMAAGGSAPELFTSLIGVFI. Over 486–489 the chain is Extracellular; it reads SHSN. The helical transmembrane segment at 490-510 threads the bilayer; sequence VGIGTIVGSAVFNILFVIGTC. The Cytoplasmic portion of the chain corresponds to 511 to 530; the sequence is ALFSREILNLTWWPLFRDVS. Residues 531–551 form a helical membrane-spanning segment; that stretch reads FYILDLSMLIVFFLDSFIAWW. A topological domain (extracellular) is located at residue E552. Residues 553 to 573 traverse the membrane as a helical segment; it reads SLLLLLAYALYVFTMKWNKQI. At 574 to 938 the chain is on the cytoplasmic side; the sequence is ELWVKEQLSR…SLEWPDSRQK (365 aa). The segment at 598–619 is disordered; that stretch reads PSEDAVEENEQQDSKKLKLPSV. S625 is modified (phosphoserine). Positions 650–932 are disordered; that stretch reads GEARPSKDKQ…ENEEPLSLEW (283 aa). Positions 661–675 are enriched in polar residues; that stretch reads SLNQEARVLSQTKAE. T690 is modified (phosphothreonine). Positions 703–715 are enriched in acidic residues; that stretch reads QEDDPGCQEDVDE. Residues 730–751 are compositionally biased toward basic and acidic residues; sequence ETETEGKKDEQEGETEAERKED. Acidic residues-rich tracts occupy residues 766–782 and 802–820; these read GETE…GETE and QEGE…GETE. Positions 833 to 855 are enriched in basic and acidic residues; that stretch reads AESKEVEQERETEAEGKDKHEGQ. Acidic residues-rich tracts occupy residues 870-880 and 896-928; these read GETEANAEDQC and DGGD…EEPL. The chain crosses the membrane as a helical span at residues 939–959; the sequence is QAIYLFLLPIVFPLWLTIPDV. Over 960-966 the chain is Extracellular; that stretch reads RRQESRK. The chain crosses the membrane as a helical span at residues 967 to 987; sequence FFVITFLGSIIWIAMFSYLMV. Topologically, residues 988–1002 are cytoplasmic; sequence WWAHQVGETIGISEE. A helical membrane pass occupies residues 1003–1023; that stretch reads IMGLTILAAGTSIPDLITSVI. The Alpha-2 repeat unit spans residues 1010–1041; the sequence is AAGTSIPDLITSVIVARKGLGDMAVSSSVGSN. Residues 1024–1041 are Extracellular-facing; that stretch reads VARKGLGDMAVSSSVGSN. Residues 1042-1062 form a helical membrane-spanning segment; sequence IFDITVGLPVPWLLFSLINAL. Residues 1063 to 1070 lie on the Cytoplasmic side of the membrane; sequence QPVPVSSN. A helical transmembrane segment spans residues 1071–1091; it reads GLFCAIVLLFLMLLFVIFSIA. The Extracellular portion of the chain corresponds to 1092 to 1099; that stretch reads SCKWRMNK. The chain crosses the membrane as a helical span at residues 1100–1120; that stretch reads ILGFTMFLLYFVFLVISVMLE. Residues 1121–1130 are Cytoplasmic-facing; that stretch reads DRIISCPVSV.

This sequence belongs to the Ca(2+):cation antiporter (CaCA) (TC 2.A.19) family. SLC24A subfamily. Post-translationally, the uncleaved signal sequence is required for efficient membrane targeting and proper membrane integration and topology.

Its subcellular location is the cell membrane. It catalyses the reaction Ca(2+)(out) + K(+)(out) + 4 Na(+)(in) = Ca(2+)(in) + K(+)(in) + 4 Na(+)(out). Its function is as follows. Calcium, potassium:sodium antiporter that transports 1 Ca(2+) and 1 K(+) in exchange for 4 Na(+). Critical component of the visual transduction cascade, controlling the calcium concentration of outer segments during light and darkness. Light causes a rapid lowering of cytosolic free calcium in the outer segment of both retinal rod and cone photoreceptors and the light-induced lowering of calcium is caused by extrusion via this protein which plays a key role in the process of light adaptation. The sequence is that of Sodium/potassium/calcium exchanger 1 from Mus musculus (Mouse).